We begin with the raw amino-acid sequence, 266 residues long: Small ribosomal subunit protein uS2 (266 aa).

The protein belongs to the universal ribosomal protein uS2 family.

The sequence is that of Small ribosomal subunit protein uS2 from Bartonella tribocorum (strain CIP 105476 / IBS 506).